The sequence spans 393 residues: Acetate kinase (393 aa).

Position 6 (Asn-6) interacts with Mg(2+). Lys-13 is an ATP binding site. Arg-87 is a substrate binding site. Asp-143 functions as the Proton donor/acceptor in the catalytic mechanism. ATP contacts are provided by residues His-203–Gly-207, Asp-278–Arg-280, and Gly-326–Asn-330. Position 380 (Glu-380) interacts with Mg(2+).

It belongs to the acetokinase family. In terms of assembly, homodimer. Requires Mg(2+) as cofactor. Mn(2+) serves as cofactor.

The protein localises to the cytoplasm. It carries out the reaction acetate + ATP = acetyl phosphate + ADP. It functions in the pathway metabolic intermediate biosynthesis; acetyl-CoA biosynthesis; acetyl-CoA from acetate: step 1/2. Catalyzes the formation of acetyl phosphate from acetate and ATP. Can also catalyze the reverse reaction. The polypeptide is Acetate kinase (Mycoplasma capricolum subsp. capricolum (strain California kid / ATCC 27343 / NCTC 10154)).